The sequence spans 156 residues: Small ribosomal subunit protein uS7 (156 aa).

Belongs to the universal ribosomal protein uS7 family. Part of the 30S ribosomal subunit. Contacts proteins S9 and S11.

One of the primary rRNA binding proteins, it binds directly to 16S rRNA where it nucleates assembly of the head domain of the 30S subunit. Is located at the subunit interface close to the decoding center, probably blocks exit of the E-site tRNA. The protein is Small ribosomal subunit protein uS7 of Chromobacterium violaceum (strain ATCC 12472 / DSM 30191 / JCM 1249 / CCUG 213 / NBRC 12614 / NCIMB 9131 / NCTC 9757 / MK).